Here is a 243-residue protein sequence, read N- to C-terminus: Segregation and condensation protein A (243 aa).

The protein belongs to the ScpA family. As to quaternary structure, component of a cohesin-like complex composed of ScpA, ScpB and the Smc homodimer, in which ScpA and ScpB bind to the head domain of Smc. The presence of the three proteins is required for the association of the complex with DNA.

The protein resides in the cytoplasm. In terms of biological role, participates in chromosomal partition during cell division. May act via the formation of a condensin-like complex containing Smc and ScpB that pull DNA away from mid-cell into both cell halves. This chain is Segregation and condensation protein A, found in Staphylococcus aureus (strain NCTC 8325 / PS 47).